Consider the following 311-residue polypeptide: Fucose-specific lectin (311 aa).

Tandem repeats lie at residues 1–53 (MSTP…KNVI), 54–103 (AKAK…AGAK), 104–151 (FTVA…EGTN), 152–209 (LGVA…FDKA), 210–256 (PPRC…DKRT), and 257–311 (ITPV…PPAE). The 6 X approximate tandem repeats stretch occupies residues 1 to 311 (MSTPGAQEVL…LGRRALPPAE (311 aa)). Beta-L-fucose is bound by residues arginine 25, glutamate 37, tryptophan 44, arginine 73, glutamate 85, tryptophan 94, arginine 126, glutamate 138, tryptophan 146, arginine 177, glutamine 189, tryptophan 198, arginine 230, glutamine 242, arginine 277, and glutamate 291.

It belongs to the fungal fucose-specific lectin family. Homodimer.

In terms of biological role, lectin that specifically binds to L-fucose and weakly reacts with mannose and N-acetyl-neuraminic acid. Has strongest preference for the alpha-1,6-fucosylated chain (core fucose) on glycoproteins among alpha-1,2-, alpha-1,3-, alpha-1,4-, and alpha-1,6-fucosylated chains. Binds to fucose residues of IgE in mice and human, causing antigen-independent IgE-mediated mast cell activation and anaphylactoid reactions in mice and is possibly implicated in allergic response to Aspergillus oryzae in humans. Induces secretion of pro-inflammatory cytokines IL6 and IL8 implicated in ocular diseases such as mycotic keratitis, probably through its interaction with host toll-like receptors TLR2 and TLR4, followed by up-regulation of pro-inflammatory cytokines. The polypeptide is Fucose-specific lectin (Aspergillus oryzae (strain ATCC 42149 / RIB 40) (Yellow koji mold)).